The chain runs to 778 residues: uncharacterized protein (778 aa).

The region spanning 1–92 (MSFVIAVPEA…GARSYVVAEA (92 aa)) is the PE domain. Disordered regions lie at residues 125–163 (ADGT…AGLI), 372–510 (TGLA…GDAF), and 718–778 (QGGL…GADG). 3 stretches are compositionally biased toward gly residues: residues 402-429 (NQTG…GGLG), 436-510 (DGTG…GDAF), and 718-763 (QGGL…GSSG).

Belongs to the mycobacterial PE family. PGRS subfamily.

This is an uncharacterized protein from Mycobacterium bovis (strain ATCC BAA-935 / AF2122/97).